The sequence spans 500 residues: Chromosomal replication initiator protein DnaA (500 aa).

Positions 1-37 are disordered; that stretch reads MSDTPFGDADHPRPAPIHPDAVLPPPMSSQSADNDPT. Residues 1–103 form a domain I, interacts with DnaA modulators region; sequence MSDTPFGDAD…EELLSDHFHK (103 aa). Pro residues predominate over residues 14-27; it reads PAPIHPDAVLPPPM. The segment at 103-161 is domain II; it reads KAIHLAITIDPDLELALGAPDHEDEEEEVPPAQFVPKVTVGVTEPSARPTTTIDDDEGN. Residues 162–378 are domain III, AAA+ region; that stretch reads RLNPKYTFDS…GALIRVTAFA (217 aa). Residues G206, G208, K209, and T210 each contribute to the ATP site. The segment at 379–500 is domain IV, binds dsDNA; it reads SLNQQPVDIS…SEITNRIKQY (122 aa).

Belongs to the DnaA family. Oligomerizes as a right-handed, spiral filament on DNA at oriC.

It is found in the cytoplasm. Plays an essential role in the initiation and regulation of chromosomal replication. ATP-DnaA binds to the origin of replication (oriC) to initiate formation of the DNA replication initiation complex once per cell cycle. Binds the DnaA box (a 9 base pair repeat at the origin) and separates the double-stranded (ds)DNA. Forms a right-handed helical filament on oriC DNA; dsDNA binds to the exterior of the filament while single-stranded (ss)DNA is stabiized in the filament's interior. The ATP-DnaA-oriC complex binds and stabilizes one strand of the AT-rich DNA unwinding element (DUE), permitting loading of DNA polymerase. After initiation quickly degrades to an ADP-DnaA complex that is not apt for DNA replication. Binds acidic phospholipids. The sequence is that of Chromosomal replication initiator protein DnaA from Cutibacterium acnes (strain DSM 16379 / KPA171202) (Propionibacterium acnes).